Here is a 296-residue protein sequence, read N- to C-terminus: Non-homologous end joining protein Ku (296 aa).

Residues 11-187 (TFGLVNIPVK…ELPEAGEPSS (177 aa)) enclose the Ku domain. A disordered region spans residues 254-296 (AAARRRGDEHEAPARGERRHAAAAAARTTGRPRAARASRKKRG). Basic and acidic residues predominate over residues 258-273 (RRGDEHEAPARGERRH). The segment covering 275–285 (AAAAARTTGRP) has biased composition (low complexity). The span at 286–296 (RAARASRKKRG) shows a compositional bias: basic residues.

The protein belongs to the prokaryotic Ku family. In terms of assembly, homodimer. Interacts with LigD.

In terms of biological role, with LigD forms a non-homologous end joining (NHEJ) DNA repair enzyme, which repairs dsDNA breaks with reduced fidelity. Binds linear dsDNA with 5'- and 3'- overhangs but not closed circular dsDNA nor ssDNA. Recruits and stimulates the ligase activity of LigD. The protein is Non-homologous end joining protein Ku of Anaeromyxobacter sp. (strain K).